The following is a 441-amino-acid chain: G2/mitotic-specific cyclin-2 (441 aa).

Belongs to the cyclin family. Cyclin AB subfamily. In terms of assembly, interacts with the CDC2 and CDK2 protein kinases to form a serine/threonine kinase holoenzyme complex. The cyclin subunit imparts substrate specificity to the complex.

Essential for the control of the cell cycle at the G2/M (mitosis) transition. G2/M cyclins accumulate steadily during G2 and are abruptly destroyed at mitosis. The polypeptide is G2/mitotic-specific cyclin-2 (Antirrhinum majus (Garden snapdragon)).